The primary structure comprises 218 residues: Protein P9 (218 aa).

The protein localises to the virion membrane. The chain is Protein P9 (IX) from Pseudoalteromonas espejiana (Bacteriophage PM2).